Here is a 534-residue protein sequence, read N- to C-terminus: Zinc finger protein 397 (534 aa).

Residue Ser-31 is modified to Phosphoserine. One can recognise an SCAN box domain in the interval 50–132; that stretch reads RQQFRKFCYQ…TLLEDLEREF (83 aa). Residues Lys-55, Lys-171, Lys-202, and Lys-252 each participate in a glycyl lysine isopeptide (Lys-Gly) (interchain with G-Cter in SUMO2) cross-link. The segment at 197-242 is disordered; the sequence is DISGEKSQRLSQEPSFGGFSEHKSSLEWQQGSAPGETLRRSPSQRA. 9 consecutive C2H2-type zinc fingers follow at residues 285 to 307, 313 to 335, 341 to 363, 369 to 391, 397 to 419, 425 to 447, 453 to 475, 481 to 503, and 509 to 531; these read YRCDICGHSFKQHSSLTQHQRIH, YKCNQCGKAFSLRSYLIIHQRIH, YECSECGKAFNQSSALIRHRKIH, CKCNECGKAFSQSSYLIIHQRIH, YECNECGKTFSQSSKLIRHQRIH, YECNECGKAFRQSSELITHQRIH, YECNECGKAFSLSSNLIRHQRIH, YQCNECGKTFKRSSALVQHQRIH, and YICSECGKAFRHRSVLTRHQRVH.

The protein belongs to the krueppel C2H2-type zinc-finger protein family.

The protein resides in the nucleus. Functionally, DNA-dependent transcriptional repressor. This is Zinc finger protein 397 (ZNF397) from Bos taurus (Bovine).